A 476-amino-acid polypeptide reads, in one-letter code: Bifunctional protein HldE (476 aa).

The segment at 1 to 318 is ribokinase; that stretch reads MKPILPDYNN…AEAIHGSRDT (318 aa). Position 195–198 (195–198) interacts with ATP; it reads NMSE. Asp-264 is an active-site residue. Residues 344–476 are cytidylyltransferase; sequence MTNGCFDILH…IIDAIKGGRG (133 aa).

The protein in the N-terminal section; belongs to the carbohydrate kinase PfkB family. It in the C-terminal section; belongs to the cytidylyltransferase family. In terms of assembly, homodimer.

It carries out the reaction D-glycero-beta-D-manno-heptose 7-phosphate + ATP = D-glycero-beta-D-manno-heptose 1,7-bisphosphate + ADP + H(+). The enzyme catalyses D-glycero-beta-D-manno-heptose 1-phosphate + ATP + H(+) = ADP-D-glycero-beta-D-manno-heptose + diphosphate. It functions in the pathway nucleotide-sugar biosynthesis; ADP-L-glycero-beta-D-manno-heptose biosynthesis; ADP-L-glycero-beta-D-manno-heptose from D-glycero-beta-D-manno-heptose 7-phosphate: step 1/4. The protein operates within nucleotide-sugar biosynthesis; ADP-L-glycero-beta-D-manno-heptose biosynthesis; ADP-L-glycero-beta-D-manno-heptose from D-glycero-beta-D-manno-heptose 7-phosphate: step 3/4. It participates in bacterial outer membrane biogenesis; LPS core biosynthesis. Catalyzes the phosphorylation of D-glycero-D-manno-heptose 7-phosphate at the C-1 position to selectively form D-glycero-beta-D-manno-heptose-1,7-bisphosphate. Functionally, catalyzes the ADP transfer from ATP to D-glycero-beta-D-manno-heptose 1-phosphate, yielding ADP-D-glycero-beta-D-manno-heptose. The chain is Bifunctional protein HldE from Vibrio vulnificus (strain CMCP6).